The sequence spans 101 residues: Interleukin-8 (101 aa).

The first 22 residues, 1–22 (MNSKLAVALLATFLLSLTLCEA), serve as a signal peptide directing secretion. Arg-27 is subject to Citrulline. 2 disulfides stabilise this stretch: Cys-34–Cys-61 and Cys-36–Cys-77.

This sequence belongs to the intercrine alpha (chemokine CxC) family. In terms of assembly, homodimer. Interacts with TNFAIP6 (via Link domain); this interaction interferes with chemokine binding to glycosaminoglycans. Citrullination at Arg-27 prevents proteolysis, and dampens tissue inflammation, it also enhances leukocytosis, possibly through impaired chemokine clearance from the blood circulation.

Its subcellular location is the secreted. Chemotactic factor that mediates inflammatory response by attracting neutrophils, basophils, and T-cells to clear pathogens and protect the host from infection. Also plays an important role in neutrophil activation. Released in response to an inflammatory stimulus, exerts its effect by binding to the G-protein-coupled receptors CXCR1 and CXCR2, primarily found in neutrophils, monocytes and endothelial cells. G-protein heterotrimer (alpha, beta, gamma subunits) constitutively binds to CXCR1/CXCR2 receptor and activation by IL8 leads to beta and gamma subunits release from Galpha (GNAI2 in neutrophils) and activation of several downstream signaling pathways including PI3K and MAPK pathways. The sequence is that of Interleukin-8 (CXCL8) from Oryctolagus cuniculus (Rabbit).